The following is a 187-amino-acid chain: Elongation factor P (187 aa).

Belongs to the elongation factor P family.

It is found in the cytoplasm. Its pathway is protein biosynthesis; polypeptide chain elongation. Functionally, involved in peptide bond synthesis. Stimulates efficient translation and peptide-bond synthesis on native or reconstituted 70S ribosomes in vitro. Probably functions indirectly by altering the affinity of the ribosome for aminoacyl-tRNA, thus increasing their reactivity as acceptors for peptidyl transferase. The polypeptide is Elongation factor P (Mycobacteroides abscessus (strain ATCC 19977 / DSM 44196 / CCUG 20993 / CIP 104536 / JCM 13569 / NCTC 13031 / TMC 1543 / L948) (Mycobacterium abscessus)).